The following is a 308-amino-acid chain: Porphobilinogen deaminase (308 aa).

Residue Cys240 is modified to S-(dipyrrolylmethanemethyl)cysteine.

It belongs to the HMBS family. As to quaternary structure, monomer. The cofactor is dipyrromethane.

The catalysed reaction is 4 porphobilinogen + H2O = hydroxymethylbilane + 4 NH4(+). It participates in porphyrin-containing compound metabolism; protoporphyrin-IX biosynthesis; coproporphyrinogen-III from 5-aminolevulinate: step 2/4. Functionally, tetrapolymerization of the monopyrrole PBG into the hydroxymethylbilane pre-uroporphyrinogen in several discrete steps. This chain is Porphobilinogen deaminase, found in Maridesulfovibrio salexigens (strain ATCC 14822 / DSM 2638 / NCIMB 8403 / VKM B-1763) (Desulfovibrio salexigens).